A 490-amino-acid polypeptide reads, in one-letter code: Pyridine nucleotide-disulfide oxidoreductase domain-containing protein 1 (490 aa).

This sequence belongs to the class-I pyridine nucleotide-disulfide oxidoreductase family. PYROXD1 subfamily. FAD serves as cofactor.

Its subcellular location is the nucleus. It localises to the cytoplasm. The protein resides in the myofibril. It is found in the sarcomere. Probable FAD-dependent oxidoreductase; involved in the cellular oxidative stress response. Required for normal sarcomere structure and muscle fiber integrity. This Danio rerio (Zebrafish) protein is Pyridine nucleotide-disulfide oxidoreductase domain-containing protein 1 (pyroxd1).